The sequence spans 201 residues: MAAAVAGPEIERLIQLLAKLPGLGPRSARRAALHLIKKREALMAPLASALQVAIERIQVCKVCGNIDTQNPCTVCTDPRRDPSIIVVVADVADLWALERAHAASGRYHVLGATLSPLDGVGPDDLSIDALVARAHDPQVSEIVLALNATVDGQTTAHYITDLLMEAGVKVTRLAHGVPVGGELDYLDEGTLSAAMRQRTLF.

The C4-type zinc finger occupies 60–75; sequence CKVCGNIDTQNPCTVC. Positions 83-178 constitute a Toprim domain; sequence SIIVVVADVA…KVTRLAHGVP (96 aa).

The protein belongs to the RecR family.

Functionally, may play a role in DNA repair. It seems to be involved in an RecBC-independent recombinational process of DNA repair. It may act with RecF and RecO. The protein is Recombination protein RecR of Rhodopseudomonas palustris (strain BisB18).